Reading from the N-terminus, the 1943-residue chain is Sickle tail protein homolog (1943 aa).

Disordered stretches follow at residues 1–79 (MEEN…KEIL) and 112–177 (QERL…RSTN). Residues 38–47 (AECRRTKERL) show a composition bias toward basic and acidic residues. Residues 48 to 62 (SNGNSRGSVSKSSRN) show a composition bias toward polar residues. Serine 169 is subject to Phosphoserine. At tyrosine 244 the chain carries Phosphotyrosine. Residues 290–331 (ARGDGPGAPRPGSTAHPPHAIPNSPPSTPVPHSMPPSPSRIP) form a disordered region. Residues 308–328 (HAIPNSPPSTPVPHSMPPSPS) are compositionally biased toward pro residues. Serine 357 carries O-linked (GlcNAc) serine glycosylation. 2 positions are modified to phosphoserine: serine 361 and serine 365. Position 393 is a phosphotyrosine (tyrosine 393). Residues 456 to 476 (RKYPDSHLPTLGSKTPPASPH) form a disordered region. At threonine 470 the chain carries Phosphothreonine. A phosphoserine mark is found at serine 474 and serine 526. Coiled-coil stretches lie at residues 557–581 (RETRERMQAMEKQIASLTGLVQSAL) and 644–685 (MSLL…ELEI). Residue serine 809 is modified to Phosphoserine. The interval 848–874 (VLKSQEEAAHTSGQPFHSTGAPGDAKS) is disordered. Residues 957–985 (SAKNRAVSIEKAEKKWEEKRQNLDHYNGK) adopt a coiled-coil conformation. Disordered stretches follow at residues 1003-1230 (PNLE…SDAS), 1305-1329 (KTKEMEKQNTDKCHVSSHTRLTESS), and 1352-1377 (PKEARHANVNPNEDGESSSSSPTEEN). Phosphoserine occurs at positions 1027, 1030, 1033, and 1044. A compositionally biased stretch (pro residues) spans 1044 to 1053 (SPPPPPPPPR). 3 stretches are compositionally biased toward basic and acidic residues: residues 1155 to 1167 (EPSRADSHVKDTR), 1174 to 1192 (PKEKKNLEFFHEDVRKSDV), and 1305 to 1318 (KTKEMEKQNTDKCH). Positions 1368–1377 (SSSSSPTEEN) are enriched in polar residues. Position 1461 is a phosphoserine (serine 1461). A coiled-coil region spans residues 1464-1490 (FEECDEELERMMMEEKIEEEEEEENGD). Disordered regions lie at residues 1481–1572 (EEEE…PKKK), 1606–1660 (EEEE…EIRK), and 1677–1943 (ENTI…KETS). Polar residues-rich tracts occupy residues 1491–1501 (SVVQNNNTSQM) and 1512–1533 (RTGQQVETKSQPHSLATETRNP). 2 stretches are compositionally biased toward basic and acidic residues: residues 1539–1548 (NRTELNKFSH) and 1612–1625 (GTLKQHKEAKRFEI). A compositionally biased stretch (polar residues) spans 1643–1653 (QPSIESTSPIS). A coiled-coil region spans residues 1656–1686 (DEIRKNTYRTLDSLEQTIKQLENTISEMSPK). 2 stretches are compositionally biased toward polar residues: residues 1691 to 1706 (TSCSSNRDSVASSSHI) and 1731 to 1747 (IPSASRKGSSGAPQTSR). Serine 1739 is subject to Phosphoserine. A compositionally biased stretch (basic and acidic residues) spans 1763-1775 (KPGKQSKLQDPRQ). Residues 1806–1825 (SPSSGKSSSLPSSSGDSSNL) show a composition bias toward low complexity. Polar residues-rich tracts occupy residues 1834–1843 (SIASNPLSPQ) and 1853–1869 (LIPSVSNGSLKFQSLTH). A Phosphoserine modification is found at serine 1841. Positions 1892 to 1905 (SFSSSPPSPASSVS) are enriched in low complexity. Phosphoserine is present on residues serine 1896, serine 1899, and serine 1902. A compositionally biased stretch (polar residues) spans 1906–1943 (LNQGAKGTRTIHTPSLTSYKAQNGSSSKATPSTAKETS).

Interacts with CPNE4 (via VWFA domain).

The protein resides in the cytoplasm. It localises to the cytoskeleton. The protein localises to the microtubule organizing center. Its subcellular location is the centrosome. In terms of biological role, required for normal development of intervertebral disks. This Homo sapiens (Human) protein is Sickle tail protein homolog (KIAA1217).